The sequence spans 142 residues: HTH-type transcriptional repressor NsrR (142 aa).

Residues 2–129 (QLTSFTDYGL…DRHTLAELVE (128 aa)) form the HTH rrf2-type domain. The H-T-H motif DNA-binding region spans 28-51 (ITEVTQVYGVSRNHMVKIINQLSH). Positions 91, 96, and 102 each coordinate [2Fe-2S] cluster.

It depends on [2Fe-2S] cluster as a cofactor.

Functionally, nitric oxide-sensitive repressor of genes involved in protecting the cell against nitrosative stress. May require iron for activity. The sequence is that of HTH-type transcriptional repressor NsrR from Proteus mirabilis (strain HI4320).